Consider the following 102-residue polypeptide: Aspartyl/glutamyl-tRNA(Asn/Gln) amidotransferase subunit C (102 aa).

The protein belongs to the GatC family. Heterotrimer of A, B and C subunits.

The catalysed reaction is L-glutamyl-tRNA(Gln) + L-glutamine + ATP + H2O = L-glutaminyl-tRNA(Gln) + L-glutamate + ADP + phosphate + H(+). The enzyme catalyses L-aspartyl-tRNA(Asn) + L-glutamine + ATP + H2O = L-asparaginyl-tRNA(Asn) + L-glutamate + ADP + phosphate + 2 H(+). Its function is as follows. Allows the formation of correctly charged Asn-tRNA(Asn) or Gln-tRNA(Gln) through the transamidation of misacylated Asp-tRNA(Asn) or Glu-tRNA(Gln) in organisms which lack either or both of asparaginyl-tRNA or glutaminyl-tRNA synthetases. The reaction takes place in the presence of glutamine and ATP through an activated phospho-Asp-tRNA(Asn) or phospho-Glu-tRNA(Gln). This Bordetella petrii (strain ATCC BAA-461 / DSM 12804 / CCUG 43448) protein is Aspartyl/glutamyl-tRNA(Asn/Gln) amidotransferase subunit C.